The following is a 567-amino-acid chain: MSRISRQAYADMFGPTVGDRVRLADTALWVEVEKDFTIYGEEVKFGGGKVIRDGMGQGQMLAAEAMDLVLTNALIIDHWGIVKADIGIKHGRIAVIGKAGNPDVQPGVNVPVGPGTEVIAAEGKIVTAGGVDSHIHFICPQQVDEALNSGVTTFIGGGTGPATGTNATTCTPGPWYLARMLQAADSLPINIGLLGKGNASRPDALREQIGAGAVGLKLHEDWGSTPAAIDCCLGVAEEMDIQVAIHTDTLNESGCIEDTLAAIGDRTIHTFHTEGAGGGHAPDIIRAAGQANVLPSSTNPTLPYTINTVDEHLDMLMVCHHLDPSIAEDVAFAESRIRRETIAAEDILHDMGAFAMTSSDSQAMGRVGEVVLRTWQVAHQMKLRRGPLAPDTPYSDNFRVKRYIAKYTINPALTHGIGHEVGSVEVGKLADLVLWSPAFFAVKPALVLKGGMIVTAPMGDINGSIPTPQPVHYRSMFGALGAARHATRMTFLPQAAMDRGLAEALNLRSLIGVVNGCRRVRKPDMVHNTLQPLIEVDAQTYQVRADGELLVCEPASELPLAQRYFLF.

The Urease domain occupies 129 to 567; the sequence is GGVDSHIHFI…LPLAQRYFLF (439 aa). 3 residues coordinate Ni(2+): H134, H136, and K217. K217 is subject to N6-carboxylysine. H219 lines the substrate pocket. The Ni(2+) site is built by H246 and H272. Residue H320 is the Proton donor of the active site. D360 is a binding site for Ni(2+).

The protein belongs to the metallo-dependent hydrolases superfamily. Urease alpha subunit family. Heterotrimer of UreA (gamma), UreB (beta) and UreC (alpha) subunits. Three heterotrimers associate to form the active enzyme. Ni cation serves as cofactor. In terms of processing, carboxylation allows a single lysine to coordinate two nickel ions.

The protein localises to the cytoplasm. The catalysed reaction is urea + 2 H2O + H(+) = hydrogencarbonate + 2 NH4(+). Its pathway is nitrogen metabolism; urea degradation; CO(2) and NH(3) from urea (urease route): step 1/1. The sequence is that of Urease subunit alpha from Pseudomonas putida (strain ATCC 700007 / DSM 6899 / JCM 31910 / BCRC 17059 / LMG 24140 / F1).